Here is a 287-residue protein sequence, read N- to C-terminus: Protease HtpX (287 aa).

A run of 2 helical transmembrane segments spans residues 4–24 (IFLLIATNLAVLLVASIVMSI) and 33–53 (GGLLVFAAIFGFGGAFISLAI). H139 lines the Zn(2+) pocket. E140 is an active-site residue. H143 is a binding site for Zn(2+). Transmembrane regions (helical) follow at residues 154 to 174 (LIQGVVNTFVIFAARVVAGII) and 195 to 215 (AVVFVLDMLFGILASIIVAYF). E220 is a Zn(2+) binding site.

It belongs to the peptidase M48B family. The cofactor is Zn(2+).

The protein localises to the cell inner membrane. In Shewanella baltica (strain OS185), this protein is Protease HtpX.